A 222-amino-acid polypeptide reads, in one-letter code: Sortase A (222 aa).

Topologically, residues Met1 to Ala7 are cytoplasmic. Residues Ile8–Val28 traverse the membrane as a helical segment. Residues Lys29–Lys222 lie on the Extracellular side of the membrane. His127 (proton donor/acceptor) is an active-site residue. Cys188 functions as the Acyl-thioester intermediate in the catalytic mechanism.

Belongs to the bacterial sortase family. Class A subfamily.

It is found in the cell membrane. Its activity is regulated as follows. Activity is enhanced by Zn(2+) and strongly enhanced by Ca(2+). Inhibited by chalcone, a precursor of several flavonoids, which blocks the SrtA active site. Functionally, transpeptidase that anchors surface proteins to the cell wall. Recognizes and modifies its substrate by proteolytic cleavage of a C-terminal sorting signal. Following cleavage, a covalent intermediate is formed via a thioester bond between the sortase and its substrate, which is then transferred and covalently attached to the cell wall. This sortase recognizes a Leu-Pro-x-Thr-Gly (LPXTG) motif, which is cleaved by the sortase between the threonine and glycine residues. Involved in pathogenesis. May regulate the rate of synthesis and/or the stability of a subset of LPXTG proteins. Not involved in cell wall-anchoring of Hbp2 (SvpA) or Hbp1. This Listeria monocytogenes serovar 1/2a (strain ATCC BAA-679 / EGD-e) protein is Sortase A.